Reading from the N-terminus, the 543-residue chain is Carboxypeptidase Y homolog A (543 aa).

Positions 1 to 17 are cleaved as a signal peptide; that stretch reads MKVATSALLVGAVSASV. Positions 18–128 are excised as a propeptide; that stretch reads GPQQQVLKFP…KLENYSMRTK (111 aa). N-linked (GlcNAc...) asparagine glycosylation is found at Asn122 and Asn213. Intrachain disulfides connect Cys182–Cys421, Cys316–Cys330, Cys340–Cys363, Cys347–Cys356, and Cys385–Cys391. Ser269 is an active-site residue. Residue Asp460 is part of the active site. Residue Asn508 is glycosylated (N-linked (GlcNAc...) asparagine). Residue His519 is part of the active site.

Belongs to the peptidase S10 family.

The protein localises to the vacuole. The catalysed reaction is Release of a C-terminal amino acid with broad specificity.. Its function is as follows. Vacuolar carboxypeptidase involved in degradation of small peptides. Digests preferentially peptides containing an aliphatic or hydrophobic residue in P1' position, as well as methionine, leucine or phenylalanine in P1 position of ester substrate. In Leptosphaeria maculans (strain JN3 / isolate v23.1.3 / race Av1-4-5-6-7-8) (Blackleg fungus), this protein is Carboxypeptidase Y homolog A (CPYA).